A 132-amino-acid chain; its full sequence is Fatty acid-binding protein (132 aa).

(5Z,8Z,11Z,14Z)-eicosatetraenoate is bound by residues Arg107 and Arg127–Tyr129. Residues Arg107 and Arg127–Tyr129 each bind (9Z)-octadecenoate.

Belongs to the calycin superfamily. Fatty-acid binding protein (FABP) family.

The protein localises to the cytoplasm. May play a role in the transport of fatty acids. Binds to various fatty acids but not retinoids. This chain is Fatty acid-binding protein, found in Schistosoma japonicum (Blood fluke).